The primary structure comprises 101 residues: Small ubiquitin-related modifier 1 (101 aa).

Residues 20-97 (EYIKLKVIGQ…IEVYQEQTGG (78 aa)) form the Ubiquitin-like domain. Gly-97 participates in a covalent cross-link: Glycyl lysine isopeptide (Gly-Lys) (interchain with K-? in acceptor proteins). A propeptide spanning residues 98–101 (HSTV) is cleaved from the precursor.

This sequence belongs to the ubiquitin family. SUMO subfamily. In terms of assembly, interacts with SAE2, UBE2I, RANBP2, PIAS1 and PIAS2. Covalently attached to a number of proteins. Post-translationally, cleavage of precursor form by a sentrin-specific protease is necessary for function.

It is found in the nucleus membrane. The protein localises to the nucleus speckle. Its subcellular location is the cytoplasm. It localises to the nucleus. The protein resides in the PML body. It is found in the cell membrane. Functionally, ubiquitin-like protein that can be covalently attached to proteins as a monomer or a lysine-linked polymer. Covalent attachment via an isopeptide bond to its substrates requires prior activation by the E1 complex SAE1-SAE2 and linkage to the E2 enzyme UBE2I. This post-translational modification on lysine residues of proteins plays a crucial role in a number of cellular processes such as nuclear transport, DNA replication and repair, mitosis and signal transduction. Polymeric SUMO1 chains are also susceptible to polyubiquitination which functions as a signal for proteasomal degradation of modified proteins. The sequence is that of Small ubiquitin-related modifier 1 (SUMO1) from Gallus gallus (Chicken).